A 220-amino-acid polypeptide reads, in one-letter code: Uracil-DNA glycosylase (220 aa).

Asp61 (proton acceptor) is an active-site residue.

It belongs to the uracil-DNA glycosylase (UDG) superfamily. UNG family.

The protein localises to the cytoplasm. The enzyme catalyses Hydrolyzes single-stranded DNA or mismatched double-stranded DNA and polynucleotides, releasing free uracil.. Functionally, excises uracil residues from the DNA which can arise as a result of misincorporation of dUMP residues by DNA polymerase or due to deamination of cytosine. The protein is Uracil-DNA glycosylase of Pseudoalteromonas translucida (strain TAC 125).